The following is a 500-amino-acid chain: Galactofuranose transporter ATP-binding protein YtfR (500 aa).

ABC transporter domains lie at 10–245 and 259–497; these read LRTE…LGRE and LSDK…IMNA. Residue 42 to 49 participates in ATP binding; it reads GENGAGKS.

This sequence belongs to the ABC transporter superfamily. In terms of assembly, the complex is composed of two ATP-binding proteins (YtfR), two transmembrane proteins (YtfT and YjfF) and a solute-binding protein (YtfQ).

Its subcellular location is the cell inner membrane. The enzyme catalyses D-galactofuranose(out) + ATP + H2O = D-galactofuranose(in) + ADP + phosphate + H(+). In terms of biological role, part of the ABC transporter complex YtfQRT-YjfF involved in galactofuranose transport. Responsible for energy coupling to the transport system. The chain is Galactofuranose transporter ATP-binding protein YtfR (ytfR) from Escherichia coli (strain K12).